Here is a 272-residue protein sequence, read N- to C-terminus: Shikimate dehydrogenase (NADP(+)) (272 aa).

Residues 14 to 16 and Thr-61 contribute to the shikimate site; that span reads SKS. Catalysis depends on Lys-65, which acts as the Proton acceptor. Residue Glu-77 participates in NADP(+) binding. Shikimate contacts are provided by Asn-86 and Asp-102. NADP(+)-binding positions include 126–130, 149–154, and Met-213; these read GAGGA and NRTVSR. A shikimate-binding site is contributed by Tyr-215. Gly-237 serves as a coordination point for NADP(+).

Belongs to the shikimate dehydrogenase family. As to quaternary structure, homodimer.

It catalyses the reaction shikimate + NADP(+) = 3-dehydroshikimate + NADPH + H(+). It functions in the pathway metabolic intermediate biosynthesis; chorismate biosynthesis; chorismate from D-erythrose 4-phosphate and phosphoenolpyruvate: step 4/7. In terms of biological role, involved in the biosynthesis of the chorismate, which leads to the biosynthesis of aromatic amino acids. Catalyzes the reversible NADPH linked reduction of 3-dehydroshikimate (DHSA) to yield shikimate (SA). The chain is Shikimate dehydrogenase (NADP(+)) from Shigella boydii serotype 4 (strain Sb227).